A 118-amino-acid polypeptide reads, in one-letter code: Holo-[acyl-carrier-protein] synthase (118 aa).

Mg(2+)-binding residues include D8 and E58.

This sequence belongs to the P-Pant transferase superfamily. AcpS family. The cofactor is Mg(2+).

The protein localises to the cytoplasm. It carries out the reaction apo-[ACP] + CoA = holo-[ACP] + adenosine 3',5'-bisphosphate + H(+). Transfers the 4'-phosphopantetheine moiety from coenzyme A to a Ser of acyl-carrier-protein. In Listeria monocytogenes serotype 4b (strain CLIP80459), this protein is Holo-[acyl-carrier-protein] synthase.